The chain runs to 516 residues: Serine carboxypeptidase-like 49 (516 aa).

A signal peptide spans 1–22 (MEKLTFLSLLLHFVVFIASTIP). Residues 23–82 (SSSFLLNDRTFERSNLPSTRAEKLIRELNLFPQQDLNVIDVADLPLTAAEGPGIVERKFV) constitute a propeptide that is removed on maturation. Cystine bridges form between Cys139–Cys379, Cys307–Cys322, and Cys345–Cys350. An N-linked (GlcNAc...) asparagine glycan is attached at Asn157. Residue Ser229 is part of the active site. Asp417 is an active-site residue. Cys420 provides a ligand contact to substrate. His474 is a catalytic residue.

This sequence belongs to the peptidase S10 family. In terms of tissue distribution, expressed in roots, senescent leaves and flowers.

The protein resides in the secreted. In terms of biological role, probable carboxypeptidase. The sequence is that of Serine carboxypeptidase-like 49 (SCPL49) from Arabidopsis thaliana (Mouse-ear cress).